A 567-amino-acid polypeptide reads, in one-letter code: Proline--tRNA ligase (567 aa).

Belongs to the class-II aminoacyl-tRNA synthetase family. ProS type 1 subfamily. In terms of assembly, homodimer.

Its subcellular location is the cytoplasm. It catalyses the reaction tRNA(Pro) + L-proline + ATP = L-prolyl-tRNA(Pro) + AMP + diphosphate. Functionally, catalyzes the attachment of proline to tRNA(Pro) in a two-step reaction: proline is first activated by ATP to form Pro-AMP and then transferred to the acceptor end of tRNA(Pro). As ProRS can inadvertently accommodate and process non-cognate amino acids such as alanine and cysteine, to avoid such errors it has two additional distinct editing activities against alanine. One activity is designated as 'pretransfer' editing and involves the tRNA(Pro)-independent hydrolysis of activated Ala-AMP. The other activity is designated 'posttransfer' editing and involves deacylation of mischarged Ala-tRNA(Pro). The misacylated Cys-tRNA(Pro) is not edited by ProRS. The chain is Proline--tRNA ligase from Campylobacter fetus subsp. fetus (strain 82-40).